A 182-amino-acid chain; its full sequence is Protein Syd (182 aa).

The protein belongs to the Syd family.

Its subcellular location is the cell inner membrane. Its function is as follows. Interacts with the SecY protein in vivo. May bind preferentially to an uncomplexed state of SecY, thus functioning either as a chelating agent for excess SecY in the cell or as a regulatory factor that negatively controls the translocase function. This is Protein Syd from Aliivibrio salmonicida (strain LFI1238) (Vibrio salmonicida (strain LFI1238)).